The primary structure comprises 281 residues: CDAN1-interacting nuclease 1 (281 aa).

The protein localises to the nucleus. It localises to the cytoplasm. Its function is as follows. Plays a role in erythroid cell differentiation. This is CDAN1-interacting nuclease 1 (CDIN1) from Bos taurus (Bovine).